We begin with the raw amino-acid sequence, 302 residues long: Chloramphenicol resistance protein (302 aa).

It is found in the cell membrane. In terms of biological role, this protein is thought to be a membrane-associated barrier of drug uptake. In Escherichia coli, this protein is Chloramphenicol resistance protein (cml).